Consider the following 114-residue polypeptide: Large ribosomal subunit protein bL20c (114 aa).

The protein belongs to the bacterial ribosomal protein bL20 family.

Its subcellular location is the plastid. It is found in the chloroplast. In terms of biological role, binds directly to 23S ribosomal RNA and is necessary for the in vitro assembly process of the 50S ribosomal subunit. It is not involved in the protein synthesizing functions of that subunit. The polypeptide is Large ribosomal subunit protein bL20c (Tetradesmus obliquus (Green alga)).